We begin with the raw amino-acid sequence, 86 residues long: Mitochondrial import inner membrane translocase subunit Tim10 (86 aa).

The Twin CX3C motif signature appears at 29 to 54 (CQAKCIATAFKESELTKGEAVCLDRC). Intrachain disulfides connect Cys-29–Cys-54 and Cys-33–Cys-50.

It belongs to the small Tim family. As to quaternary structure, heterohexamer; composed of 3 copies of tim-9/tin-9.1 and 3 copies of tim-10/tin-10, named soluble 70 kDa complex. The complex associates with the tim-22 component of the TIM22 complex. Interacts with multi-pass transmembrane proteins in transit.

The protein resides in the mitochondrion inner membrane. Functionally, mitochondrial intermembrane chaperone that participates in the import and insertion of multi-pass transmembrane proteins into the mitochondrial inner membrane. May also be required for the transfer of beta-barrel precursors from the TOM complex to the sorting and assembly machinery (SAM complex) of the outer membrane. Acts as a chaperone-like protein that protects the hydrophobic precursors from aggregation and guide them through the mitochondrial intermembrane space. This chain is Mitochondrial import inner membrane translocase subunit Tim10 (tin-10), found in Caenorhabditis briggsae.